A 439-amino-acid polypeptide reads, in one-letter code: Casein kinase I homolog 3 (439 aa).

The Protein kinase domain occupies 15–286; the sequence is YRVGKKIGEG…LRSLFDSLLL (272 aa). ATP contacts are provided by residues 21-29 and Lys44; that span reads IGEGSFGML. Catalysis depends on Asp134, which acts as the Proton acceptor. The tract at residues 366 to 426 is disordered; the sequence is DGIPGKAASP…PSKEKSRKKF (61 aa). Positions 372-413 are enriched in low complexity; sequence AASPQVQQQQQTSSAQQQQPQRVEQPAPQTTQPTQVDTQQAA.

It belongs to the protein kinase superfamily. CK1 Ser/Thr protein kinase family. Casein kinase I subfamily.

The protein localises to the cytoplasm. It catalyses the reaction L-seryl-[protein] + ATP = O-phospho-L-seryl-[protein] + ADP + H(+). The enzyme catalyses L-threonyl-[protein] + ATP = O-phospho-L-threonyl-[protein] + ADP + H(+). Its function is as follows. Casein kinases are operationally defined by their preferential utilization of acidic proteins such as caseins as substrates. This Schizosaccharomyces pombe (strain 972 / ATCC 24843) (Fission yeast) protein is Casein kinase I homolog 3 (cki3).